We begin with the raw amino-acid sequence, 165 residues long: uncharacterized protein (165 aa).

Residues 10-27 (VSLTIVFVLFFSADVSLT) form a helical membrane-spanning segment.

The protein localises to the membrane. This is an uncharacterized protein from Saccharomyces cerevisiae (strain ATCC 204508 / S288c) (Baker's yeast).